Consider the following 97-residue polypeptide: uncharacterized protein (97 aa).

This sequence to B.licheniformis xpaL1 and to B.subtilis XhlA.

This is an uncharacterized protein from Bacillus licheniformis.